The sequence spans 260 residues: 3-oxoadipate CoA-transferase subunit B (260 aa).

The active site involves glutamate 51.

The protein belongs to the 3-oxoacid CoA-transferase subunit B family. Heterotetramer composed of 2 A and 2 B subunits.

It catalyses the reaction 3-oxoadipate + succinyl-CoA = 3-oxoadipyl-CoA + succinate. The protein operates within aromatic compound metabolism; beta-ketoadipate pathway; acetyl-CoA and succinyl-CoA from 3-oxoadipate: step 1/2. The polypeptide is 3-oxoadipate CoA-transferase subunit B (catJ) (Pseudomonas knackmussii (strain DSM 6978 / CCUG 54928 / LMG 23759 / B13)).